The sequence spans 170 residues: Probable T4-type lysozyme 2 (170 aa).

The active-site Proton donor is the E13. Residue D22 is the Nucleophile of the active site.

Belongs to the glycosyl hydrolase 24 family.

It carries out the reaction Hydrolysis of (1-&gt;4)-beta-linkages between N-acetylmuramic acid and N-acetyl-D-glucosamine residues in a peptidoglycan and between N-acetyl-D-glucosamine residues in chitodextrins.. The chain is Probable T4-type lysozyme 2 from Dictyostelium discoideum (Social amoeba).